Here is a 158-residue protein sequence, read N- to C-terminus: 2-C-methyl-D-erythritol 2,4-cyclodiphosphate synthase (158 aa).

2 residues coordinate a divalent metal cation: Asp9 and His11. 4-CDP-2-C-methyl-D-erythritol 2-phosphate is bound by residues 9–11 (DVH) and 35–36 (HS). His43 is a binding site for a divalent metal cation. Residues 57-59 (DIG), 62-66 (FPDTD), 133-136 (TTTE), Phe140, and Arg143 contribute to the 4-CDP-2-C-methyl-D-erythritol 2-phosphate site.

The protein belongs to the IspF family. Homotrimer. It depends on a divalent metal cation as a cofactor.

The catalysed reaction is 4-CDP-2-C-methyl-D-erythritol 2-phosphate = 2-C-methyl-D-erythritol 2,4-cyclic diphosphate + CMP. The protein operates within isoprenoid biosynthesis; isopentenyl diphosphate biosynthesis via DXP pathway; isopentenyl diphosphate from 1-deoxy-D-xylulose 5-phosphate: step 4/6. Functionally, involved in the biosynthesis of isopentenyl diphosphate (IPP) and dimethylallyl diphosphate (DMAPP), two major building blocks of isoprenoid compounds. Catalyzes the conversion of 4-diphosphocytidyl-2-C-methyl-D-erythritol 2-phosphate (CDP-ME2P) to 2-C-methyl-D-erythritol 2,4-cyclodiphosphate (ME-CPP) with a corresponding release of cytidine 5-monophosphate (CMP). This Haemophilus influenzae (strain 86-028NP) protein is 2-C-methyl-D-erythritol 2,4-cyclodiphosphate synthase.